Consider the following 95-residue polypeptide: Co-chaperonin GroES (95 aa).

This sequence belongs to the GroES chaperonin family. In terms of assembly, heptamer of 7 subunits arranged in a ring. Interacts with the chaperonin GroEL.

Its subcellular location is the cytoplasm. Functionally, together with the chaperonin GroEL, plays an essential role in assisting protein folding. The GroEL-GroES system forms a nano-cage that allows encapsulation of the non-native substrate proteins and provides a physical environment optimized to promote and accelerate protein folding. GroES binds to the apical surface of the GroEL ring, thereby capping the opening of the GroEL channel. This is Co-chaperonin GroES from Rickettsia rickettsii (strain Sheila Smith).